A 217-amino-acid polypeptide reads, in one-letter code: uncharacterized protein (217 aa).

An N-terminal signal peptide occupies residues 1 to 24; it reads MRYTVLIALQGALLLLLLIDDGQG.

This is an uncharacterized protein from Aedes vexans (Inland floodwater mosquito).